We begin with the raw amino-acid sequence, 520 residues long: RNA polymerase sigma factor sigA (520 aa).

Residues 1 to 66 (MTATPAVIGL…APATPKLTAV (66 aa)) constitute a chloroplast transit peptide. Positions 37–49 (GGGGGGGGGGGGD) are enriched in gly residues. Disordered stretches follow at residues 37 to 57 (GGGG…APPA), 87 to 117 (HHSS…AHAH), and 171 to 190 (SVSA…TKNG). A compositionally biased stretch (pro residues) spans 96 to 108 (APPPPPPPPPTPS). Basic residues predominate over residues 175 to 187 (RQRRMSGRRRGRT). The short motif at 305 to 318 (DLIQGGLIGLLRGI) is the Polymerase core binding element. The H-T-H motif DNA-binding region spans 479-498 (WEDISRQFGLSRERVRQVGL).

It belongs to the sigma-70 factor family. In terms of tissue distribution, expressed in shoots. Expressed in the tips of fully elongated leaves. Expressed in leaf blades.

It localises to the plastid. It is found in the chloroplast. Its function is as follows. Sigma factors are initiation factors that promote the attachment of plastid-encoded RNA polymerase (PEP) to specific initiation sites and are then released. Controls the transcription of the psaA and psaB genes in chloroplast, and thus maintains the abundance of the core protein complex PsaA-PsaB of photosystem I (PSI) in the thylakoid membrane. Maintains PSI activity, sufficient rate of electron transfer from PSII to PSI, and photochemical efficiency. In Oryza sativa subsp. japonica (Rice), this protein is RNA polymerase sigma factor sigA.